A 688-amino-acid polypeptide reads, in one-letter code: MSDDMVLHFSSNSSNQSDHSLPDKIAKLEARLTGKTPSSAKPPQQQQQQQQQVSLWSSASAAVKVVTSTPPGLSETSISDSDDENTGDFLIRANTKKRQKVQESNNFSVVDHVEPQEAAYDGRKNDAESKTGLDVSKKKQGRGRASSTGRGRGSKTNNDVTKSQFVVAPVSAASQLDASDQKDFRPDGQLRNGECSLQDEDLKSLRAKIAMLEEELRKSRQDSSEYHHLVRNLENEVKDLKDQEQQGKQKTTKVISDLLISVSKTERQEARTKVRNESLRLGSVGVLRTGTIIAETWEDGQMLKDLNAQLRQLLETKEAIERQRKLLKKRQNGDKNDGTDTESGAQEEDIIPDEVYKSRLTSIKREEEAVLRERERYTLEKGLLMREMKRIRDEDGSRFNHFPVLNSRYALLNLLGKGGFSEVYKAYDLVDHRYVACKLHGLNAQWSEEKKQSYIRHANRECEIHKSLVHHHIVRLWDKFHIDMHTFCTVLEYCSGKDLDAVLKATSNLPEKEARIIIVQIVQGLVYLNKKSQKIIHYDLKPGNVLFDEFGVAKVTDFGLSKIVEDNVGSQGMELTSQGAGTYWYLPPECFELNKTPMISSKVDVWSVGVLFYQMLFGKRPFGHDQSQERILREDTIIKAKKVEFPVTRPAISNEAKDLIRRCLTYNQEDRPDVLTMAQDPYLAYSKK.

2 disordered regions span residues M1–S196 and L326–E348. Residues S10–H19 show a composition bias toward low complexity. Over residues S20 to L32 the composition is skewed to basic and acidic residues. Residues K35 to P70 show a composition bias toward low complexity. 2 consecutive short sequence motifs (nuclear localization signal) follow at residues K97–K100 and R123–K139. The segment covering D111 to K137 has biased composition (basic and acidic residues). The span at K155–Q164 shows a compositional bias: polar residues. Basic and acidic residues predominate over residues S179 to G188. Coiled coils occupy residues E194–K253 and E298–N332. The Nuclear localization signal signature appears at K389 to R392. Residues Y409 to L683 form the Protein kinase domain. ATP contacts are provided by residues L415–V423 and K438. The active-site Proton acceptor is D539.

The protein belongs to the protein kinase superfamily. Ser/Thr protein kinase family. Homooligomer. Interacts with TKI1 and ASF1B/SGA1. Requires Mg(2+) as cofactor. Mn(2+) is required as a cofactor. Post-translationally, autophosphorylation on both phosphoserine and phosphothreonine. As to expression, most abundant in developing floral meristem. Also expressed in maturing flowers, developing seeds, mature leaves and roots. Barely detected in stems.

It is found in the nucleus. It catalyses the reaction L-seryl-[protein] + ATP = O-phospho-L-seryl-[protein] + ADP + H(+). The enzyme catalyses L-threonyl-[protein] + ATP = O-phospho-L-threonyl-[protein] + ADP + H(+). Oligomerization is required for activity. May be activated by trans-autophosphorylation. Higher activity during G2/M phase and G1 phase compared to S phase. Required for correct initiation of floral organ primordia and for proper development of organ primordia. Phosphorylates in vitro ASF1B/SGA1, the C-terminal part of TKI1 and histone H3. The polypeptide is Serine/threonine-protein kinase TOUSLED (TOUSLED) (Arabidopsis thaliana (Mouse-ear cress)).